We begin with the raw amino-acid sequence, 250 residues long: Large ribosomal subunit protein uL29m (250 aa).

An N6-acetyllysine modification is found at lysine 144.

Belongs to the universal ribosomal protein uL29 family. As to quaternary structure, component of the mitochondrial large ribosomal subunit (mt-LSU). Mature mammalian 55S mitochondrial ribosomes consist of a small (28S) and a large (39S) subunit. The 28S small subunit contains a 12S ribosomal RNA (12S mt-rRNA) and 30 different proteins. The 39S large subunit contains a 16S rRNA (16S mt-rRNA), a copy of mitochondrial valine transfer RNA (mt-tRNA(Val)), which plays an integral structural role, and 52 different proteins.

The protein localises to the mitochondrion. This Homo sapiens (Human) protein is Large ribosomal subunit protein uL29m (MRPL47).